Reading from the N-terminus, the 507-residue chain is WD-40 repeat-containing protein MSI4 (507 aa).

Met-1 is modified (N-acetylmethionine). The interval 1-66 is disordered; sequence MESDEAAAVS…KTQQSPSVDE (66 aa). 3 WD repeats span residues 95–137, 162–202, and 217–257; these read RWGP…KPRV, IHPG…NRHA, and GHQD…TTIG. The span at 258-272 shows a compositional bias: polar residues; it reads TDSKSSGSIIKQTGE. The disordered stretch occupies residues 258 to 282; that stretch reads TDSKSSGSIIKQTGEGTDKNESPTV. WD repeat units lie at residues 290–330, 335–375, 384–424, and 439–486; these read GHED…NPVT, AHDA…ANGV, GHKA…KKSD, and GHRD…YRPE. The short motif at 308–323 is the DWD box element; it reads FCSVGDDSCLILWDAR.

The protein belongs to the WD repeat RBAP46/RBAP48/MSI1 family. In terms of assembly, interacts with AHL16 and HOS1. Interacts with LHP1, PDP1, PDP2 and PDP3. Component of the PRC2 (polycomb repressive complex 2) complex which regulates histone methylation on histone H3K27. Expressed in rosette leaves, cauline leaves, main stems and developing fruits. Expressed at higher levels in roots and flowers.

The protein resides in the nucleus. Functionally, core histone-binding subunit that may target chromatin assembly factors, chromatin remodeling factors and histone deacetylases to their histone substrates in a manner that is regulated by nucleosomal DNA. Component of the flowering autonomous pathway which positively regulates flowering by promoting transcriptional repression of the flowering repressor FLC. May promote histone deacetylation at the FLC locus leading to the formation of repressive chromatin structures. Forms a histone deacetylase complex with HDA5, HDA6 and FLD that represses FLC gene expression to control flowering time. Also negatively regulates cold-responsive genes. Acts together with PDP1 and MSI5 to regulate the function of the PRC2 complex on FLC. Required for systemic acquired resistance (SAR) toward pathogenic bacteria (e.g. Pseudomonas syringae pv tomato DC3000 (avrPto)). Together with FLD and MSI4/FVE, contributes to dehydroabietinal-dependent (DA, a diterpenoid tricyclic diterpene) activation of flowering ans SAR. The sequence is that of WD-40 repeat-containing protein MSI4 from Arabidopsis thaliana (Mouse-ear cress).